The sequence spans 444 residues: Beta-D-glucosyl crocetin beta-1,6-glucosyltransferase (444 aa).

Catalysis depends on histidine 9, which acts as the Proton acceptor. Residue histidine 9 coordinates an anthocyanidin. The active-site Charge relay is the aspartate 108. The UDP-alpha-D-glucose site is built by threonine 130, alanine 319, glutamine 321, histidine 336, tryptophan 339, asparagine 340, serine 341, glutamate 344, aspartate 360, and glutamine 361.

This sequence belongs to the UDP-glycosyltransferase family. As to expression, ubiquitous.

It catalyses the reaction beta-D-glucosyl crocetin + UDP-alpha-D-glucose = beta-D-gentiobiosyl crocetin + UDP + H(+). It carries out the reaction bis(beta-D-glucosyl) crocetin + UDP-alpha-D-glucose = beta-D-gentiobiosyl beta-D-glucosyl crocetin + UDP + H(+). The enzyme catalyses beta-D-gentiobiosyl beta-D-glucosyl crocetin + UDP-alpha-D-glucose = bis(beta-D-gentiobiosyl) crocetin + UDP + H(+). Functionally, glucosyltransferase catalyzing the beta 1-6 glucosylation of the sugar moiety of crocetin glucosyl esters to produce crocetin gentiobiosyl esters. Weak activity toward curcumin glucosides, but no activity with flavonoid glucosides, coumarin glucosides, 4-nitrophenyl glucoside or crocetin. Involved with UGT75L6 in sequential glycosylation of crocetin to crocin (bis(beta-D-gentiobiosyl) crocetin). The chain is Beta-D-glucosyl crocetin beta-1,6-glucosyltransferase (UGT94E5) from Gardenia jasminoides (Cape jasmine).